We begin with the raw amino-acid sequence, 200 residues long: Ribosome maturation factor RimP (200 aa).

It belongs to the RimP family.

The protein resides in the cytoplasm. Its function is as follows. Required for maturation of 30S ribosomal subunits. This Polaromonas sp. (strain JS666 / ATCC BAA-500) protein is Ribosome maturation factor RimP.